The following is a 206-amino-acid chain: uncharacterized protein (206 aa).

The first 18 residues, 1 to 18 (MKTYSLLLGLFISFGVLA), serve as a signal peptide directing secretion.

This is an uncharacterized protein from Haemophilus influenzae (strain ATCC 51907 / DSM 11121 / KW20 / Rd).